We begin with the raw amino-acid sequence, 312 residues long: Bark storage protein B (312 aa).

A signal peptide spans 1-24 (MPQQSMQASLRDPIAEIERSNCKI). N-linked (GlcNAc...) asparagine glycosylation is present at Asn-70.

To wound-inducible poplar endochitinases. As to quaternary structure, monomer. In terms of tissue distribution, bark tissue.

Functionally, may play a role in nitrogen storage. This chain is Bark storage protein B (BSP), found in Populus deltoides (Eastern poplar).